The chain runs to 78 residues: Probable [Fe-S]-dependent transcriptional repressor (78 aa).

Cysteine 56, cysteine 61, cysteine 64, and cysteine 70 together coordinate iron-sulfur cluster.

Belongs to the FeoC family.

In terms of biological role, may function as a transcriptional regulator that controls feoABC expression. This is Probable [Fe-S]-dependent transcriptional repressor from Salmonella heidelberg (strain SL476).